The following is a 325-amino-acid chain: Peroxidase RIP1 (325 aa).

Positions 1–21 (MASSSPCQIFLVFVMVTLVTS) are cleaved as a signal peptide. 4 cysteine pairs are disulfide-bonded: C38-C118, C71-C76, C125-C321, and C206-C231. Catalysis depends on H69, which acts as the Proton acceptor. Positions 70, 73, 75, 77, and 79 each coordinate Ca(2+). N-linked (GlcNAc...) asparagine glycosylation is present at N87. P169 provides a ligand contact to substrate. N174 carries N-linked (GlcNAc...) asparagine glycosylation. H199 is a heme b binding site. T200 is a Ca(2+) binding site. N215 is a glycosylation site (N-linked (GlcNAc...) asparagine). Residues D244, T246, and E251 each coordinate Ca(2+).

The protein belongs to the peroxidase family. Classical plant (class III) peroxidase subfamily. Heme b serves as cofactor. Ca(2+) is required as a cofactor. As to expression, expressed in the differentiating root epidermis following inoculation with the bacterial symbiont Sinorhizobium meliloti.

It is found in the secreted. It carries out the reaction 2 a phenolic donor + H2O2 = 2 a phenolic radical donor + 2 H2O. Its function is as follows. Removal of H(2)O(2), oxidation of toxic reductants, biosynthesis and degradation of lignin, suberization, auxin catabolism, response to environmental stresses such as wounding, pathogen attack and oxidative stress. These functions might be dependent on each isozyme/isoform in each plant tissue. The protein is Peroxidase RIP1 of Medicago truncatula (Barrel medic).